Reading from the N-terminus, the 901-residue chain is Schlafen family member 11 (901 aa).

Mg(2+)-binding residues include E209 and E214. The active site involves K216. Positions 285, 287, 321, and 322 each coordinate Zn(2+). Residue 599 to 606 (GLPGSGKT) coordinates ATP.

Belongs to the Schlafen family. Subgroup III subfamily. As to quaternary structure, homodimer. Interacts with MCM3. Interacts with DHX9. Interacts with RPA1. Mg(2+) is required as a cofactor. As to expression, exhibits a wider expression range in ovarian and colon adenocarcinoma than in their corresponding healthy tissues.

The protein localises to the nucleus. Its subcellular location is the chromosome. Inhibitor of DNA replication that promotes cell death in response to DNA damage. Acts as a guardian of the genome by killing cells with defective replication. Persistently blocks stressed replication forks by opening chromatin across replication initiation sites at stressed replication forks, possibly leading to unwind DNA ahead of the MCM helicase and block fork progression, ultimately leading to cell death. Upon DNA damage, inhibits translation of ATR or ATM based on distinct codon usage without disrupting early DNA damage response signaling. Antiviral restriction factor with manganese-dependent type II tRNA endoribonuclease. A single tRNA molecule is bound and cleaved by the SLFN11 dimer. Specifically abrogates the production of retroviruses such as human immunodeficiency virus 1 (HIV-1) by acting as a specific inhibitor of the synthesis of retroviruses encoded proteins in a codon-usage-dependent manner. Impairs the replication of human cytomegalovirus (HCMV) and some Flaviviruses. Exploits the unique viral codon bias towards A/T nucleotides. Also acts as an interferon (IFN)-induced antiviral protein which acts as an inhibitor of retrovirus protein synthesis. The polypeptide is Schlafen family member 11 (Homo sapiens (Human)).